We begin with the raw amino-acid sequence, 298 residues long: GTPase Era (298 aa).

Residues K3–E170 form the Era-type G domain. The G1 stretch occupies residues G11–S18. G11–S18 is a GTP binding site. Residues Q37–N41 are G2. The tract at residues D58–G61 is G3. GTP is bound by residues D58–I62 and N120–D123. A G4 region spans residues N120–D123. Positions I149–A151 are G5. The KH type-2 domain occupies T201–K279.

The protein belongs to the TRAFAC class TrmE-Era-EngA-EngB-Septin-like GTPase superfamily. Era GTPase family. Monomer.

The protein localises to the cytoplasm. Its subcellular location is the cell membrane. An essential GTPase that binds both GDP and GTP, with rapid nucleotide exchange. Plays a role in 16S rRNA processing and 30S ribosomal subunit biogenesis and possibly also in cell cycle regulation and energy metabolism. The chain is GTPase Era from Streptococcus equi subsp. equi (strain 4047).